The sequence spans 475 residues: Membrane-bound lytic murein transglycosylase F (475 aa).

An N-terminal signal peptide occupies residues Met-1–Gly-30. The interval Lys-31–Gly-269 is non-LT domain. Residues Asp-270–Val-475 form an LT domain region. The active site involves Glu-314.

In the N-terminal section; belongs to the bacterial solute-binding protein 3 family. It in the C-terminal section; belongs to the transglycosylase Slt family.

The protein resides in the cell outer membrane. The catalysed reaction is Exolytic cleavage of the (1-&gt;4)-beta-glycosidic linkage between N-acetylmuramic acid (MurNAc) and N-acetylglucosamine (GlcNAc) residues in peptidoglycan, from either the reducing or the non-reducing ends of the peptidoglycan chains, with concomitant formation of a 1,6-anhydrobond in the MurNAc residue.. In terms of biological role, murein-degrading enzyme that degrades murein glycan strands and insoluble, high-molecular weight murein sacculi, with the concomitant formation of a 1,6-anhydromuramoyl product. Lytic transglycosylases (LTs) play an integral role in the metabolism of the peptidoglycan (PG) sacculus. Their lytic action creates space within the PG sacculus to allow for its expansion as well as for the insertion of various structures such as secretion systems and flagella. This Salmonella typhi protein is Membrane-bound lytic murein transglycosylase F.